The primary structure comprises 369 residues: Protein-glutamate methylesterase/protein-glutamine glutaminase (369 aa).

The Response regulatory domain maps to 4–121 (KVLVVDDSSF…ARNRDEAVSL (118 aa)). The residue at position 55 (Asp-55) is a 4-aspartylphosphate. A compositionally biased stretch (low complexity) spans 146–171 (ATSSARPLASRTAAPAASAPARPATT). Residues 146 to 175 (ATSSARPLASRTAAPAASAPARPATTKFRA) are disordered. Residues 176-369 (SGKKYQLTAI…ERMLVEVGLA (194 aa)) form the CheB-type methylesterase domain. Active-site residues include Ser-188, His-215, and Asp-311.

Belongs to the CheB family. In terms of processing, phosphorylated by CheA. Phosphorylation of the N-terminal regulatory domain activates the methylesterase activity.

It localises to the cytoplasm. The enzyme catalyses [protein]-L-glutamate 5-O-methyl ester + H2O = L-glutamyl-[protein] + methanol + H(+). It carries out the reaction L-glutaminyl-[protein] + H2O = L-glutamyl-[protein] + NH4(+). Its function is as follows. Involved in chemotaxis. Part of a chemotaxis signal transduction system that modulates chemotaxis in response to various stimuli. Catalyzes the demethylation of specific methylglutamate residues introduced into the chemoreceptors (methyl-accepting chemotaxis proteins or MCP) by CheR. Also mediates the irreversible deamidation of specific glutamine residues to glutamic acid. The chain is Protein-glutamate methylesterase/protein-glutamine glutaminase from Vibrio parahaemolyticus serotype O3:K6 (strain RIMD 2210633).